A 138-amino-acid chain; its full sequence is MNYEDDNVESGQAGKSDAEYKADIANREKEVTKALNAGKPQDALNVALADPPIYTKTGAIKDQNATIVLNLLGSFKDKDVETSVETLNDDQLDILMKYVYRGLATGENSPIFFKWHECVLKKGGAGTIIRVISEKKTV.

The disordered stretch occupies residues 1-21; sequence MNYEDDNVESGQAGKSDAEYK.

Belongs to the ARPC5 family. As to quaternary structure, component of the Arp2/3 complex composed of arpB/Arp2, arpC/Arp3, arcA/p41-arc, arcB/p34-arc, arcC/p21-arc, arcD/p20-arc and arcE/p16-arc. Interacts with carmil (via the region between the LRR domain and COOH-terminal proline-rich domain); carmil is required for Arp2/3-dependent actin nucleation. Arp2/3 complex, MyoB, MyoC, and the alpha and beta subunits of capping protein all form a larger complex with carmil.

The protein resides in the cytoplasm. It localises to the cytoskeleton. The protein localises to the cytosol. It is found in the cell cortex. Its subcellular location is the cell projection. The protein resides in the pseudopodium. Functionally, functions as a component of the Arp2/3 complex which is involved in regulation of actin polymerization and together with an activating nucleation-promoting factor (NPF) mediates the formation of branched actin networks. Seems to contact the pointed end of the daughter actin filament. The Arp2/3 complex is involved in organizing the actin system in cell motility and chemotaxis, in phagocytosis and macropinocytosis, at late steps of endosome processing, and in mitosis. In concert with a group of other proteins, the Arp2/3 complex plays a general role in the rapid activation and adaptation of the actin system to its multiple functions. The protein is Actin-related protein 2/3 complex subunit 5 (arcE) of Dictyostelium discoideum (Social amoeba).